The sequence spans 61 residues: Small ribosomal subunit protein uS14 (61 aa).

Zn(2+)-binding residues include cysteine 24, cysteine 27, cysteine 40, and cysteine 43.

It belongs to the universal ribosomal protein uS14 family. Zinc-binding uS14 subfamily. In terms of assembly, part of the 30S ribosomal subunit. Contacts proteins S3 and S10. Zn(2+) is required as a cofactor.

Binds 16S rRNA, required for the assembly of 30S particles and may also be responsible for determining the conformation of the 16S rRNA at the A site. In Fervidobacterium nodosum (strain ATCC 35602 / DSM 5306 / Rt17-B1), this protein is Small ribosomal subunit protein uS14.